The primary structure comprises 397 residues: Phosphoglycerate kinase (397 aa).

Residues 23 to 25 (DFN), Arg-38, 61 to 64 (HMGK), Arg-122, and Arg-155 contribute to the substrate site. ATP is bound by residues Lys-206, Gly-296, Glu-327, and 353–356 (GGDS).

Belongs to the phosphoglycerate kinase family. In terms of assembly, monomer.

Its subcellular location is the cytoplasm. The enzyme catalyses (2R)-3-phosphoglycerate + ATP = (2R)-3-phospho-glyceroyl phosphate + ADP. It participates in carbohydrate degradation; glycolysis; pyruvate from D-glyceraldehyde 3-phosphate: step 2/5. The sequence is that of Phosphoglycerate kinase from Clostridium perfringens (strain SM101 / Type A).